Here is a 415-residue protein sequence, read N- to C-terminus: D-threonate kinase (415 aa).

Residues aspartate 9, arginine 53, and 81–84 (KIDS) contribute to the substrate site. Residues serine 251, 345-348 (GGET), and glycine 392 each bind ATP.

It belongs to the four-carbon acid sugar kinase family.

The enzyme catalyses D-threonate + ATP = 4-O-phospho-D-threonate + ADP + H(+). Its function is as follows. Catalyzes the ATP-dependent phosphorylation of D-threonate to D-threonate 4-phosphate. Can also phosphorylate 4-hydroxy-L-threonine, with lower efficiency. This chain is D-threonate kinase, found in Cupriavidus necator (strain ATCC 17699 / DSM 428 / KCTC 22496 / NCIMB 10442 / H16 / Stanier 337) (Ralstonia eutropha).